Consider the following 561-residue polypeptide: Phosphatidylinositol 4-kinase gamma 1 (561 aa).

Residues 121-416 (GAQPLLLPSG…SVFGKTSEDS (296 aa)) enclose the PI3K/PI4K catalytic domain. A G-loop region spans residues 127–133 (LPSGMGG). ATP contacts are provided by residues 128-134 (PSGMGGA), Lys149, and 233-236 (QRFV). The segment at 266–274 (LNLDRHAGN) is catalytic loop. The activation loop stretch occupies residues 296 to 322 (PIDHGLCLPECLDDPYFEWLNWPQALV). Asp298 provides a ligand contact to ATP. Positions 456–520 (PPLVPRGPRA…PISPNHDESK (65 aa)) are disordered. Residues 467 to 484 (TIPNDVTASMSSSQNQRI) are compositionally biased toward polar residues.

This sequence belongs to the PI3/PI4-kinase family. Type II PI4K subfamily.

The catalysed reaction is a 1,2-diacyl-sn-glycero-3-phospho-(1D-myo-inositol) + ATP = a 1,2-diacyl-sn-glycero-3-phospho-(1D-myo-inositol 4-phosphate) + ADP + H(+). The phosphorylation of phosphatidylinositol (PI) to PI4P is the first committed step in the generation of phosphatidylinositol 4,5-bisphosphate (PIP2), a precursor of the second messenger inositol 1,4,5-trisphosphate (InsP3). This Arabidopsis thaliana (Mouse-ear cress) protein is Phosphatidylinositol 4-kinase gamma 1 (PI4KG1).